The primary structure comprises 243 residues: UDP-2,3-diacylglucosamine hydrolase (243 aa).

Mn(2+) is bound by residues aspartate 8, histidine 10, aspartate 41, asparagine 79, and histidine 114. Position 79–80 (79–80 (NR)) interacts with substrate. Substrate is bound by residues aspartate 122, lysine 164, lysine 167, and histidine 195. Histidine 195 and histidine 197 together coordinate Mn(2+).

The protein belongs to the LpxH family. Mn(2+) serves as cofactor.

It localises to the cell inner membrane. It catalyses the reaction UDP-2-N,3-O-bis[(3R)-3-hydroxytetradecanoyl]-alpha-D-glucosamine + H2O = 2-N,3-O-bis[(3R)-3-hydroxytetradecanoyl]-alpha-D-glucosaminyl 1-phosphate + UMP + 2 H(+). The protein operates within glycolipid biosynthesis; lipid IV(A) biosynthesis; lipid IV(A) from (3R)-3-hydroxytetradecanoyl-[acyl-carrier-protein] and UDP-N-acetyl-alpha-D-glucosamine: step 4/6. Its function is as follows. Hydrolyzes the pyrophosphate bond of UDP-2,3-diacylglucosamine to yield 2,3-diacylglucosamine 1-phosphate (lipid X) and UMP by catalyzing the attack of water at the alpha-P atom. Involved in the biosynthesis of lipid A, a phosphorylated glycolipid that anchors the lipopolysaccharide to the outer membrane of the cell. The protein is UDP-2,3-diacylglucosamine hydrolase of Vibrio vulnificus (strain YJ016).